The following is a 253-amino-acid chain: uncharacterized protein (253 aa).

Residues Gly-45, 66–67 (DA), 94–95 (AE), and Arg-110 contribute to the S-adenosyl-L-methionine site.

Belongs to the methyltransferase superfamily.

This is an uncharacterized protein from Bacillus subtilis (strain 168).